A 506-amino-acid polypeptide reads, in one-letter code: Maturase K (506 aa).

The protein belongs to the intron maturase 2 family. MatK subfamily.

It is found in the plastid. The protein resides in the chloroplast. In terms of biological role, usually encoded in the trnK tRNA gene intron. Probably assists in splicing its own and other chloroplast group II introns. The polypeptide is Maturase K (Trifolium repens (Creeping white clover)).